A 223-amino-acid polypeptide reads, in one-letter code: uncharacterized protein (223 aa).

Positions 1 to 22 are cleaved as a signal peptide; the sequence is MHLKKALCPALCTFLIHLCLHA. In terms of domain architecture, VWFA spans 30–204; that stretch reads DIFLMIDKSR…RSIAAAHSKR (175 aa). Positions 199-223 are disordered; that stretch reads AAHSKRPTPTPPAKESSPRYTPSLD.

This is an uncharacterized protein from Treponema pallidum (strain Nichols).